A 394-amino-acid chain; its full sequence is Tryptophan synthase beta chain (394 aa).

Lys90 bears the N6-(pyridoxal phosphate)lysine mark.

Belongs to the TrpB family. As to quaternary structure, tetramer of two alpha and two beta chains. It depends on pyridoxal 5'-phosphate as a cofactor.

The catalysed reaction is (1S,2R)-1-C-(indol-3-yl)glycerol 3-phosphate + L-serine = D-glyceraldehyde 3-phosphate + L-tryptophan + H2O. The protein operates within amino-acid biosynthesis; L-tryptophan biosynthesis; L-tryptophan from chorismate: step 5/5. Its function is as follows. The beta subunit is responsible for the synthesis of L-tryptophan from indole and L-serine. This Parabacteroides distasonis (strain ATCC 8503 / DSM 20701 / CIP 104284 / JCM 5825 / NCTC 11152) protein is Tryptophan synthase beta chain.